The chain runs to 303 residues: Mitochondrial carrier homolog 2 (303 aa).

Position 2 is an N-acetylalanine (Ala-2). Residues 2–15 are Mitochondrial intermembrane-facing; the sequence is ADAASQVLLGSGLT. 2 Solcar repeats span residues 2-98 and 118-206; these read ADAA…YQES and DRVI…INTY. Residues 16–36 traverse the membrane as a helical segment; sequence ILSQPLMYVKVLIQVGYEPLP. The Cytoplasmic portion of the chain corresponds to 37–77; that stretch reads PTIGRNIFGRQVCQLPGLFCYAQHIASIDGRRGLFTGLTPR. Residues 78–92 traverse the membrane as a helical segment; it reads LCSGVLGTVVHGKVL. Residues 93–135 are Mitochondrial intermembrane-facing; the sequence is QYYQESEKPEELGSVTVQKEYSSSFDRVIKETTREMIARSAAT. A helical membrane pass occupies residues 136 to 156; the sequence is LITHPFHVITLRSMVQFIGRE. Topologically, residues 157–180 are cytoplasmic; that stretch reads SKYCGLCDSIVTIYREEGIVGFFA. The chain crosses the membrane as a helical span at residues 181–199; that stretch reads GLIPRLLGDIISLWLCNSL. The Mitochondrial intermembrane portion of the chain corresponds to 200-231; that stretch reads AYLINTYALDSGVSTMNEMKSYSQAVTGFFAS. The chain crosses the membrane as a helical span at residues 232–252; the sequence is MLTYPFVLVSNLMAVNNCGLA. At 253–280 the chain is on the cytoplasmic side; sequence GGSPPYSPIYTSWIDCWCMLQKAGNMSR. Residues 281-303 traverse the membrane as a helical segment; the sequence is GNSLFFRKVPCGKTYCYDLRMLI.

This sequence belongs to the mitochondrial carrier (TC 2.A.29) family. In terms of assembly, interacts with p15BID. As to expression, expressed in a wide variety of tissues. Predominant expressed in liver, kidney, heart, skeletal muscle and testis.

Its subcellular location is the mitochondrion outer membrane. Protein insertase that mediates insertion of transmembrane proteins into the mitochondrial outer membrane. Catalyzes insertion of proteins with alpha-helical transmembrane regions, such as signal-anchored, tail-anchored and multi-pass membrane proteins. Does not mediate insertion of beta-barrel transmembrane proteins. Also acts as a receptor for the truncated form of pro-apoptotic BH3-interacting domain death agonist (p15 BID) and has therefore a critical function in apoptosis. Regulates the quiescence/cycling of hematopoietic stem cells (HSCs). Acts as a regulator of mitochondrial fusion, essential for the naive-to-primed interconversion of embryonic stem cells (ESCs). Acts as a regulator of lipid homeostasis and has a regulatory role in adipocyte differentiation and biology. In Mus musculus (Mouse), this protein is Mitochondrial carrier homolog 2.